Here is a 348-residue protein sequence, read N- to C-terminus: Phenylalanine--tRNA ligase alpha subunit (348 aa).

Glu268 provides a ligand contact to Mg(2+).

This sequence belongs to the class-II aminoacyl-tRNA synthetase family. Phe-tRNA synthetase alpha subunit type 1 subfamily. As to quaternary structure, tetramer of two alpha and two beta subunits. Requires Mg(2+) as cofactor.

Its subcellular location is the cytoplasm. The enzyme catalyses tRNA(Phe) + L-phenylalanine + ATP = L-phenylalanyl-tRNA(Phe) + AMP + diphosphate + H(+). The protein is Phenylalanine--tRNA ligase alpha subunit of Bordetella parapertussis (strain 12822 / ATCC BAA-587 / NCTC 13253).